We begin with the raw amino-acid sequence, 215 residues long: Cytochrome b6 (215 aa).

A helical membrane pass occupies residues 32-52 (IFYCLGGITLTCFIVQVATGF). Cys-35 lines the heme c pocket. The heme b site is built by His-86 and His-100. The next 3 membrane-spanning stretches (helical) occupy residues 90–110 (ASMM…TGGF), 116–136 (LTWI…VTGY), and 186–206 (LHTF…FLMI). 2 residues coordinate heme b: His-187 and His-202.

The protein belongs to the cytochrome b family. PetB subfamily. In terms of assembly, the 4 large subunits of the cytochrome b6-f complex are cytochrome b6, subunit IV (17 kDa polypeptide, PetD), cytochrome f and the Rieske protein, while the 4 small subunits are PetG, PetL, PetM and PetN. The complex functions as a dimer. Requires heme b as cofactor. Heme c serves as cofactor.

It localises to the plastid. It is found in the chloroplast thylakoid membrane. Its function is as follows. Component of the cytochrome b6-f complex, which mediates electron transfer between photosystem II (PSII) and photosystem I (PSI), cyclic electron flow around PSI, and state transitions. This Chara vulgaris (Common stonewort) protein is Cytochrome b6.